Here is a 775-residue protein sequence, read N- to C-terminus: Transcription activator of gluconeogenesis HCBG_00867 (775 aa).

The tract at residues 1 to 70 (MTASTQNGSP…NAKDPLRPRR (70 aa)) is disordered. 2 stretches are compositionally biased toward polar residues: residues 21 to 41 (NQES…QSPA) and 48 to 60 (TAES…STAA). The zn(2)-C6 fungal-type DNA-binding region spans 77-105 (CFACQRAHLTCGDERPCQRCIKRGLQDAC). 4 disordered regions span residues 179-248 (TQAK…PFGA), 286-351 (GAGD…NIYN), 556-592 (NLNV…AGGG), and 649-725 (QGKE…SPKQ). Polar residues predominate over residues 195–217 (MQDTSINPSAFQAPSPTSTPNFD). Over residues 218–229 (LSSNPPNRNLSS) the composition is skewed to low complexity. Polar residues-rich tracts occupy residues 230 to 244 (AMTQ…QTQD), 292 to 323 (PSDS…TQSP), 334 to 351 (WNPS…NIYN), and 557 to 576 (LNVN…TPRN). The segment covering 657–668 (GSDGKGGGGGGD) has biased composition (gly residues). Positions 669 to 713 (VAATAATTSTSTSNGANSSGHANANRNNTNPKNSSPPSSSSAAAA) are enriched in low complexity.

It belongs to the ERT1/acuK family.

The protein localises to the nucleus. In terms of biological role, transcription factor which regulates nonfermentable carbon utilization. Activator of gluconeogenetic genes. This is Transcription activator of gluconeogenesis HCBG_00867 from Ajellomyces capsulatus (strain G186AR / H82 / ATCC MYA-2454 / RMSCC 2432) (Darling's disease fungus).